Here is a 362-residue protein sequence, read N- to C-terminus: Poly(rC)-binding protein 2 (362 aa).

KH domains are found at residues 13–75 (TLTI…FAMI) and 97–162 (PVTL…VKQI). A Glycyl lysine isopeptide (Lys-Gly) (interchain with G-Cter in SUMO2) cross-link involves residue Lys-115. Ser-169 carries the post-translational modification Phosphoserine. A Glycyl lysine isopeptide (Lys-Gly) (interchain with G-Cter in SUMO2) cross-link involves residue Lys-181. A phosphoserine mark is found at Ser-185 and Ser-268. The region spanning 284–348 (TTSHELTIPN…ASISLAQYLI (65 aa)) is the KH 3 domain. Residue Lys-319 forms a Glycyl lysine isopeptide (Lys-Gly) (interchain with G-Cter in SUMO2) linkage. A phosphoserine mark is found at Ser-361 and Ser-362.

In terms of assembly, identified in a mRNP complex, at least composed of DHX9, DDX3X, ELAVL1, HNRNPU, IGF2BP1, ILF3, PABPC1, PCBP2, PTBP2, STAU1, STAU2, SYNCRIP and YBX1. Interacts with IFIH1 and RNF135. Interacts with MAVS (via C-terminus) and ITCH (via WW domains). Interacts with CGAS; preventing the formation of liquid-like droplets in which CGAS is activated. Post-translationally, phosphorylated. The non-phosphorylated form(s) exhibited the strongest poly(rC)-binding activity.

The protein resides in the nucleus. Its subcellular location is the cytoplasm. In terms of biological role, single-stranded nucleic acid binding protein that binds preferentially to oligo dC. Major cellular poly(rC)-binding protein. Also binds poly(rU). Acts as a negative regulator of antiviral signaling. Negatively regulates cellular antiviral responses mediated by MAVS signaling. It acts as an adapter between MAVS and the E3 ubiquitin ligase ITCH, therefore triggering MAVS ubiquitination and degradation. Negativeley regulates the cGAS-STING pathway via interaction with CGAS, preventing the formation of liquid-like droplets in which CGAS is activated. Together with PCBP1, required for erythropoiesis, possibly by regulating mRNA splicing. This Mus musculus (Mouse) protein is Poly(rC)-binding protein 2 (Pcbp2).